Consider the following 336-residue polypeptide: UDP-N-acetylenolpyruvoylglucosamine reductase (336 aa).

The 172-residue stretch at 17–188 folds into the FAD-binding PCMH-type domain; the sequence is LRSLAERFVE…WDVTFRLPKK (172 aa). The active site involves Arg-164. Ser-237 functions as the Proton donor in the catalytic mechanism. Glu-332 is a catalytic residue.

This sequence belongs to the MurB family. The cofactor is FAD.

Its subcellular location is the cytoplasm. It carries out the reaction UDP-N-acetyl-alpha-D-muramate + NADP(+) = UDP-N-acetyl-3-O-(1-carboxyvinyl)-alpha-D-glucosamine + NADPH + H(+). The protein operates within cell wall biogenesis; peptidoglycan biosynthesis. Cell wall formation. In Bdellovibrio bacteriovorus (strain ATCC 15356 / DSM 50701 / NCIMB 9529 / HD100), this protein is UDP-N-acetylenolpyruvoylglucosamine reductase.